The following is a 1373-amino-acid chain: Poly(A) RNA polymerase gld-2 homolog B (1373 aa).

The span at 75–91 (NSCHSSNSSSNTSNNNN) shows a compositional bias: low complexity. 6 disordered regions span residues 75 to 155 (NSCH…QEKQ), 175 to 340 (SDCK…FWKT), 425 to 543 (PDST…QQQK), 734 to 770 (PQQQQQQQLSSHPIPTGTSSHPPPPPPPHMFFHFADG), 802 to 866 (CGSG…ALGS), and 880 to 928 (HPLH…PTPV). Over residues 96–112 (GQQQQPLHYCNSNNSHS) the composition is skewed to polar residues. Composition is skewed to low complexity over residues 130–152 (QQQQQPSSFFQRQQQQHQMQMQQ), 180–219 (SDSNNNSTSSSNNNSTISSNNNNTSSASNNNTGSSSSCSN), 228–251 (NENSSSSSSSNNNNISCRNNNTSS), and 274–284 (ESGSSEGAAES). Composition is skewed to polar residues over residues 295–340 (CNSN…FWKT) and 430–442 (KSSSNTGGSNMIR). Residues 443-485 (SSSNGNSNFSRHQYGHQSTGSGYQQQQQRYRNAQNVYQQYQHQ) show a composition bias toward low complexity. The segment covering 486 to 502 (QQHHAQQHTHPHFRRKH) has biased composition (basic residues). 2 stretches are compositionally biased toward low complexity: residues 735-753 (QQQQQQQLSSHPIPTGTSS) and 819-844 (AGALRPASPALSSSSLGSESQWSGTS). Residues 855–866 (PSISPTPSALGS) show a composition bias toward polar residues. Residues 880 to 890 (HPLHQQHPPSH) show a composition bias toward low complexity. Residues 945 to 1373 (RYLAQARNIE…FAETTAAHVA (429 aa)) are sufficent for interaction with Dcr-2. Residues Asp1029 and Asp1031 each contribute to the Mg(2+) site. Residues 1211 to 1272 (TLGEHLLGFF…NIEEPFDLSN (62 aa)) enclose the PAP-associated domain. Low complexity predominate over residues 1320–1341 (LQQHQQQFEQQLHHPISGQQRS). The disordered stretch occupies residues 1320–1359 (LQQHQQQFEQQLHHPISGQQRSAGGGGDGANPVPSTLNPD).

The protein belongs to the DNA polymerase type-B-like family. GLD2 subfamily. Interacts with orb, an RNA-binding protein, generating an ovarian cytoplasmic polyadenylation complex. Interacts (via C-terminus) with Dcr-2. The cofactor is Mg(2+). It depends on Mn(2+) as a cofactor. As to expression, expressed in ovaries. Not expressed in adult males.

It localises to the cytoplasm. It catalyses the reaction RNA(n) + ATP = RNA(n)-3'-adenine ribonucleotide + diphosphate. Its function is as follows. Cytoplasmic poly(A) RNA polymerase that adds successive AMP monomers to the 3'-end of specific maternal RNAs (bcd, Tl, and tor), forming a poly(A) tail, during late oogenesis and early embryogenesis. In contrast to the canonical nuclear poly(A) RNA polymerase, it only adds poly(A) to selected cytoplasmic mRNAs. Required for localization of mRNAs to both poles of the egg, to recruit or maintain known centrosomal proteins with two types of microtubule organizing centers (MTOCs): the central MTOC that forms between the meiosis II tandem spindles and the centrosomes of the mitotic spindle. Required at the final stage of oogenesis for meiosis I metaphase arrest and for progression beyond this stage. Functions with the RNA-binding protein Dcr-2 to promote cytoplasmic polyadenylation and translational activation of certain mRNAs such as Tl and r2d2. As a consequence, is involved in regulating Toll immune signaling and promoting resistance to fungal infection. This is Poly(A) RNA polymerase gld-2 homolog B (wisp) from Drosophila melanogaster (Fruit fly).